We begin with the raw amino-acid sequence, 428 residues long: Dihydroorotase (428 aa).

Positions 59 and 61 each coordinate Zn(2+). Substrate-binding positions include 61–63 (HLR) and Asn93. Residues Asp151, His178, and His231 each coordinate Zn(2+). Asn277 contacts substrate. Zn(2+) is bound at residue Asp304. Residue Asp304 is part of the active site. Residues His308 and 322-323 (FG) contribute to the substrate site.

The protein belongs to the metallo-dependent hydrolases superfamily. DHOase family. Class I DHOase subfamily. Zn(2+) is required as a cofactor.

The enzyme catalyses (S)-dihydroorotate + H2O = N-carbamoyl-L-aspartate + H(+). It participates in pyrimidine metabolism; UMP biosynthesis via de novo pathway; (S)-dihydroorotate from bicarbonate: step 3/3. Catalyzes the reversible cyclization of carbamoyl aspartate to dihydroorotate. This is Dihydroorotase from Bacillus cereus (strain ATCC 14579 / DSM 31 / CCUG 7414 / JCM 2152 / NBRC 15305 / NCIMB 9373 / NCTC 2599 / NRRL B-3711).